Here is a 214-residue protein sequence, read N- to C-terminus: Adenylate kinase (214 aa).

10–15 (GAGKGT) lines the ATP pocket. The interval 30 to 59 (STGDMLRAAVKAGTPLGVKAQEIMIQGGLV) is NMP. Residues threonine 31, arginine 36, 57-59 (GLV), 85-88 (GFPR), and glutamine 92 each bind AMP. The interval 126–163 (GRRSCSSCGKGYHLVFDPPLRAGVCDVCGSGLVQRADD) is LID. Arginine 127 contributes to the ATP binding site. Zn(2+)-binding residues include cysteine 130, cysteine 133, cysteine 150, and cysteine 153. AMP contacts are provided by arginine 160 and arginine 171. Glycine 199 is a binding site for ATP.

This sequence belongs to the adenylate kinase family. In terms of assembly, monomer.

The protein localises to the cytoplasm. It carries out the reaction AMP + ATP = 2 ADP. Its pathway is purine metabolism; AMP biosynthesis via salvage pathway; AMP from ADP: step 1/1. Its function is as follows. Catalyzes the reversible transfer of the terminal phosphate group between ATP and AMP. Plays an important role in cellular energy homeostasis and in adenine nucleotide metabolism. This is Adenylate kinase from Trichlorobacter lovleyi (strain ATCC BAA-1151 / DSM 17278 / SZ) (Geobacter lovleyi).